A 162-amino-acid polypeptide reads, in one-letter code: Cyclic pyranopterin monophosphate synthase (162 aa).

Residues 79–81 (LCH) and 117–118 (ME) contribute to the substrate site. The active site involves D132.

This sequence belongs to the MoaC family. In terms of assembly, homohexamer; trimer of dimers.

It catalyses the reaction (8S)-3',8-cyclo-7,8-dihydroguanosine 5'-triphosphate = cyclic pyranopterin phosphate + diphosphate. It participates in cofactor biosynthesis; molybdopterin biosynthesis. Catalyzes the conversion of (8S)-3',8-cyclo-7,8-dihydroguanosine 5'-triphosphate to cyclic pyranopterin monophosphate (cPMP). The polypeptide is Cyclic pyranopterin monophosphate synthase (Bordetella avium (strain 197N)).